Reading from the N-terminus, the 22-residue chain is GLWQKIKDKASELVSGIVEGVK.

Position 22 is a lysine amide (Lys-22).

It belongs to the frog skin active peptide (FSAP) family. Caerin subfamily. In terms of tissue distribution, expressed by the skin dorsal glands.

Its subcellular location is the secreted. Antibacterial peptide with narrow spectrum of activity. Inhibits the formation of NO by neuronal nitric oxide synthase. The sequence is that of Caerin-3.1 from Litoria rothii (Roth's tree frog).